Here is a 434-residue protein sequence, read N- to C-terminus: Pre-B-cell leukemia transcription factor 3 (434 aa).

Positions 20–41 (SVQGGMALPPPPHGHEGADGDG) are disordered. Basic and acidic residues predominate over residues 32–41 (HGHEGADGDG). In terms of domain architecture, PBC spans 41–234 (GRKQDIGDIL…VMILRSRFLD (194 aa)). Residues 48–127 (DILHQIMTIT…EGVSGPEKGG (80 aa)) form a PBC-A region. The segment at 130–234 (AAAAAAAAAS…VMILRSRFLD (105 aa)) is PBC-B. The homeobox; TALE-type DNA-binding region spans 235-297 (ARRKRRNFSK…NKRIRYKKNI (63 aa)). Residues 326–341 (NQTNSPTTPNSGSSGS) show a composition bias toward low complexity. Disordered regions lie at residues 326–349 (NQTN…NSGD) and 405–434 (ANGG…DTSN). Over residues 405–422 (ANGGWQDATTPSSVTSPT) the composition is skewed to polar residues.

This sequence belongs to the TALE/PBX homeobox family. As to quaternary structure, interacts with PBXIP1.

The protein resides in the nucleus. In terms of biological role, transcriptional activator that binds the sequence 5'-ATCAATCAA-3'. The polypeptide is Pre-B-cell leukemia transcription factor 3 (Pbx3) (Mus musculus (Mouse)).